The chain runs to 337 residues: 25S rRNA (adenine(2142)-N(1))-methyltransferase (337 aa).

S-adenosyl-L-methionine-binding residues include glycine 180 and aspartate 201.

The protein belongs to the BMT2 family.

The protein resides in the nucleus. Its subcellular location is the nucleolus. The enzyme catalyses adenosine(2142) in 25S rRNA + S-adenosyl-L-methionine = N(1)-methyladenosine(2142) in 25S rRNA + S-adenosyl-L-homocysteine + H(+). S-adenosyl-L-methionine-dependent methyltransferase that specifically methylates the N(1) position of adenine 2142 in 25S rRNA. N(1)-methyladenine(2142) in 25S rRNA is present in helix 65, a region that accounts for most of the intersubunit surface of the large subunit. In Saccharomyces cerevisiae (strain ATCC 204508 / S288c) (Baker's yeast), this protein is 25S rRNA (adenine(2142)-N(1))-methyltransferase.